Consider the following 185-residue polypeptide: Putative manganese efflux pump MntP (185 aa).

6 helical membrane-spanning segments follow: residues 3–23 (IFTL…VSLA), 40–60 (LLFV…VSVI), 64–84 (FDAY…LRMI), 102–122 (TFSR…AVGI), 124–144 (LSLA…FVLI), and 165–185 (EIFG…DAMM).

The protein belongs to the MntP (TC 9.B.29) family.

It localises to the cell inner membrane. Functionally, probably functions as a manganese efflux pump. The polypeptide is Putative manganese efflux pump MntP (Elusimicrobium minutum (strain Pei191)).